A 228-amino-acid chain; its full sequence is Protein-L-isoaspartate O-methyltransferase (228 aa).

Positions 1–20 (MVAVSLKMSQPAAPPPPMGE) are disordered. Serine 76 is an active-site residue.

Belongs to the methyltransferase superfamily. L-isoaspartyl/D-aspartyl protein methyltransferase family.

It is found in the cytoplasm. The enzyme catalyses [protein]-L-isoaspartate + S-adenosyl-L-methionine = [protein]-L-isoaspartate alpha-methyl ester + S-adenosyl-L-homocysteine. Its function is as follows. Catalyzes the methyl esterification of L-isoaspartyl residues in peptides and proteins that result from spontaneous decomposition of normal L-aspartyl and L-asparaginyl residues. It plays a role in the repair and/or degradation of damaged proteins. The sequence is that of Protein-L-isoaspartate O-methyltransferase from Magnetococcus marinus (strain ATCC BAA-1437 / JCM 17883 / MC-1).